The chain runs to 418 residues: UDP-N-acetylglucosamine 1-carboxyvinyltransferase (418 aa).

A phosphoenolpyruvate-binding site is contributed by 22 to 23 (KN). Arg-93 serves as a coordination point for UDP-N-acetyl-alpha-D-glucosamine. Residue Cys-117 is the Proton donor of the active site. At Cys-117 the chain carries 2-(S-cysteinyl)pyruvic acid O-phosphothioketal. Residues Asp-306 and Ile-328 each contribute to the UDP-N-acetyl-alpha-D-glucosamine site.

It belongs to the EPSP synthase family. MurA subfamily.

The protein resides in the cytoplasm. It carries out the reaction phosphoenolpyruvate + UDP-N-acetyl-alpha-D-glucosamine = UDP-N-acetyl-3-O-(1-carboxyvinyl)-alpha-D-glucosamine + phosphate. The protein operates within cell wall biogenesis; peptidoglycan biosynthesis. Its function is as follows. Cell wall formation. Adds enolpyruvyl to UDP-N-acetylglucosamine. This chain is UDP-N-acetylglucosamine 1-carboxyvinyltransferase, found in Hydrogenovibrio crunogenus (strain DSM 25203 / XCL-2) (Thiomicrospira crunogena).